We begin with the raw amino-acid sequence, 506 residues long: Maturase K (506 aa).

The protein belongs to the intron maturase 2 family. MatK subfamily.

It localises to the plastid. Its subcellular location is the chloroplast. In terms of biological role, usually encoded in the trnK tRNA gene intron. Probably assists in splicing its own and other chloroplast group II introns. The sequence is that of Maturase K from Lathyrus aphaca (Yellow vetchling).